Here is a 428-residue protein sequence, read N- to C-terminus: Trigger factor (428 aa).

Positions 163–248 (GDTAVIDFEG…INEVKAKELP (86 aa)) constitute a PPIase FKBP-type domain.

The protein belongs to the FKBP-type PPIase family. Tig subfamily.

The protein localises to the cytoplasm. The enzyme catalyses [protein]-peptidylproline (omega=180) = [protein]-peptidylproline (omega=0). In terms of biological role, involved in protein export. Acts as a chaperone by maintaining the newly synthesized protein in an open conformation. Functions as a peptidyl-prolyl cis-trans isomerase. The protein is Trigger factor of Oceanobacillus iheyensis (strain DSM 14371 / CIP 107618 / JCM 11309 / KCTC 3954 / HTE831).